A 104-amino-acid polypeptide reads, in one-letter code: UPF0235 protein RBE_0633 (104 aa).

This sequence belongs to the UPF0235 family.

The protein is UPF0235 protein RBE_0633 of Rickettsia bellii (strain RML369-C).